Consider the following 314-residue polypeptide: MLDFEKPLFEIRNKIDSLKESQEKNEVDLQDEIDMLEASLKRETTKVYTNLKPWDRVQIARLPERPTTLDYIPYIFDSFIELHGDRSFRDDPAMIGGIGYLDGKSVTVIGQQRGKDTKDNIYRNFGMAHPEGYRKALRLMKQAEKFNRPIFTFIDTKGAYPGKAAEERGQSESIAKNLMEMASLTVPVIAVVIGEGGSGGALGIGISNRVLMLENSTYSVISPEGAAALLWKDSNLAQIAAETMKITALDLLDLGIIDEVINEPLGGAQKDEEVQALSIKKMFLKHLNELKQLTPEELANDRFEKFRKIGSVVE.

Residues 32–289 (EIDMLEASLK…KKMFLKHLNE (258 aa)) form the CoA carboxyltransferase C-terminal domain.

Belongs to the AccA family. As to quaternary structure, acetyl-CoA carboxylase is a heterohexamer composed of biotin carboxyl carrier protein (AccB), biotin carboxylase (AccC) and two subunits each of ACCase subunit alpha (AccA) and ACCase subunit beta (AccD).

The protein localises to the cytoplasm. The catalysed reaction is N(6)-carboxybiotinyl-L-lysyl-[protein] + acetyl-CoA = N(6)-biotinyl-L-lysyl-[protein] + malonyl-CoA. It participates in lipid metabolism; malonyl-CoA biosynthesis; malonyl-CoA from acetyl-CoA: step 1/1. Component of the acetyl coenzyme A carboxylase (ACC) complex. First, biotin carboxylase catalyzes the carboxylation of biotin on its carrier protein (BCCP) and then the CO(2) group is transferred by the carboxyltransferase to acetyl-CoA to form malonyl-CoA. The protein is Acetyl-coenzyme A carboxylase carboxyl transferase subunit alpha of Staphylococcus epidermidis (strain ATCC 12228 / FDA PCI 1200).